We begin with the raw amino-acid sequence, 638 residues long: 1-deoxy-D-xylulose-5-phosphate synthase (638 aa).

Thiamine diphosphate-binding positions include H79 and 120–122; that span reads AHS. A Mg(2+)-binding site is contributed by D151. Thiamine diphosphate contacts are provided by residues 152–153, N180, Y289, and E371; that span reads GA. N180 serves as a coordination point for Mg(2+).

Belongs to the transketolase family. DXPS subfamily. In terms of assembly, homodimer. The cofactor is Mg(2+). It depends on thiamine diphosphate as a cofactor.

It carries out the reaction D-glyceraldehyde 3-phosphate + pyruvate + H(+) = 1-deoxy-D-xylulose 5-phosphate + CO2. It participates in metabolic intermediate biosynthesis; 1-deoxy-D-xylulose 5-phosphate biosynthesis; 1-deoxy-D-xylulose 5-phosphate from D-glyceraldehyde 3-phosphate and pyruvate: step 1/1. Catalyzes the acyloin condensation reaction between C atoms 2 and 3 of pyruvate and glyceraldehyde 3-phosphate to yield 1-deoxy-D-xylulose-5-phosphate (DXP). This Rhizobium rhizogenes (strain K84 / ATCC BAA-868) (Agrobacterium radiobacter) protein is 1-deoxy-D-xylulose-5-phosphate synthase.